We begin with the raw amino-acid sequence, 128 residues long: Small ribosomal subunit protein eS8 (128 aa).

Belongs to the eukaryotic ribosomal protein eS8 family. Part of the 30S ribosomal subunit.

This is Small ribosomal subunit protein eS8 from Methanococcus maripaludis (strain DSM 14266 / JCM 13030 / NBRC 101832 / S2 / LL).